Here is a 447-residue protein sequence, read N- to C-terminus: N-succinylarginine dihydrolase (447 aa).

Substrate-binding positions include 21–30 (AGLAHGNVAS), asparagine 112, and 139–140 (HR). Glutamate 176 is a catalytic residue. Arginine 215 is a binding site for substrate. Histidine 251 is a catalytic residue. Positions 253 and 364 each coordinate substrate. Residue cysteine 370 is the Nucleophile of the active site.

Belongs to the succinylarginine dihydrolase family. In terms of assembly, homodimer.

The enzyme catalyses N(2)-succinyl-L-arginine + 2 H2O + 2 H(+) = N(2)-succinyl-L-ornithine + 2 NH4(+) + CO2. It participates in amino-acid degradation; L-arginine degradation via AST pathway; L-glutamate and succinate from L-arginine: step 2/5. In terms of biological role, catalyzes the hydrolysis of N(2)-succinylarginine into N(2)-succinylornithine, ammonia and CO(2). In Chromohalobacter salexigens (strain ATCC BAA-138 / DSM 3043 / CIP 106854 / NCIMB 13768 / 1H11), this protein is N-succinylarginine dihydrolase.